The primary structure comprises 236 residues: TVP38/TMEM64 family membrane protein YdjX (236 aa).

5 helical membrane passes run 7–27 (FLFA…FGLF), 50–70 (LYIL…ILVI), 72–92 (GGIV…ATLA), 156–176 (IAFW…IVIY), and 192–212 (FILQ…LAKL). The VTT domain stretch occupies residues 73 to 183 (GIVFGPLLGT…VIYTVMASDL (111 aa)).

It belongs to the TVP38/TMEM64 family.

It localises to the cell membrane. The chain is TVP38/TMEM64 family membrane protein YdjX (ydjX) from Escherichia coli (strain K12).